An 878-amino-acid chain; its full sequence is Leucine--tRNA ligase (878 aa).

Positions 43–53 match the 'HIGH' region motif; the sequence is PYPSGRIHMGH. The short motif at 630–634 is the 'KMSKS' region element; the sequence is KMSKS. Lys633 contacts ATP.

Belongs to the class-I aminoacyl-tRNA synthetase family.

Its subcellular location is the cytoplasm. It catalyses the reaction tRNA(Leu) + L-leucine + ATP = L-leucyl-tRNA(Leu) + AMP + diphosphate. This is Leucine--tRNA ligase from Rhodopseudomonas palustris (strain BisB5).